The following is a 430-amino-acid chain: Sphingosine-1-phosphate phosphatase 1 (430 aa).

A disordered region spans residues 34-103 (SSPAADEDAE…AGSQRRNSLT (70 aa)). Ser101 carries the phosphoserine modification. A Phosphothreonine modification is found at Thr103. The next 4 helical transmembrane spans lie at 121–141 (FCLG…PFWI), 152–172 (LVII…IIRW), 193–213 (MPST…LLTY), and 216–236 (WQYP…LVCL). The tract at residues 167–175 (KDIIRWPRP) is phosphatase sequence motif I. A phosphatase sequence motif II region spans residues 194 to 197 (PSTH). Catalysis depends on His197, which acts as the Proton donor. Residues 237-248 (SRIYMGMHSILD) form a phosphatase sequence motif III region. His244 acts as the Nucleophile in catalysis. The next 5 helical transmembrane spans lie at 246-266 (ILDV…FYPL), 279-299 (YAPL…FTLD), 311-331 (ILGS…LGLS), 348-368 (VTLF…VLFV), and 409-429 (YGMV…FIGI).

It belongs to the type 2 lipid phosphate phosphatase family. In terms of tissue distribution, highly expressed in liver and kidney. Expressed in epidermis, in the stratum granulosum and the stratum spinosum.

The protein localises to the endoplasmic reticulum membrane. It localises to the cell membrane. It carries out the reaction sphinganine 1-phosphate + H2O = sphinganine + phosphate. It catalyses the reaction sphing-4-enine 1-phosphate + H2O = sphing-4-enine + phosphate. Inhibited by NaF, sodium orthovanadate, propanolol, and N-ethylmaleimide. Functionally, specifically dephosphorylates sphingosine 1-phosphate (S1P), dihydro-S1P, and phyto-S1P. Does not act on ceramide 1-phosphate, lysophosphatidic acid or phosphatidic acid. Sphingosine-1-phosphate phosphatase activity is needed for efficient recycling of sphingosine into the sphingolipid synthesis pathway. Regulates the intracellular levels of the bioactive sphingolipid metabolite S1P that regulates diverse biological processes acting both as an extracellular receptor ligand or as an intracellular second messenger. Involved in efficient ceramide synthesis from exogenous sphingoid bases. Converts S1P to sphingosine, which is readily metabolized to ceramide via ceramide synthase. In concert with sphingosine kinase 2 (SphK2), recycles sphingosine into ceramide through a phosphorylation/dephosphorylation cycle. Regulates endoplasmic-to-Golgi trafficking of ceramides, resulting in the regulation of ceramide levels in the endoplasmic reticulum, preferentially long-chain ceramide species, and influences the anterograde membrane transport of both ceramide and proteins from the endoplasmic reticulum to the Golgi apparatus. The modulation of intracellular ceramide levels in turn regulates apoptosis. Via S1P levels, modulates resting tone, intracellular Ca(2+) and myogenic vasoconstriction in resistance arteries. Also involved in unfolded protein response (UPR) and ER stress-induced autophagy via regulation of intracellular S1P levels. Involved in the regulation of epidermal homeostasis and keratinocyte differentiation. The sequence is that of Sphingosine-1-phosphate phosphatase 1 from Mus musculus (Mouse).